The sequence spans 24 residues: Hyaluronidase (24 aa).

Expressed by the venom gland.

It is found in the secreted. It carries out the reaction Random hydrolysis of (1-&gt;4)-linkages between N-acetyl-beta-D-glucosamine and D-glucuronate residues in hyaluronate.. Possesses high activity against hyaluronan in vitro. This chain is Hyaluronidase, found in Tityus stigmurus (Brazilian scorpion).